We begin with the raw amino-acid sequence, 347 residues long: Endothelin receptor type B (347 aa).

The Extracellular portion of the chain corresponds to 1-7; the sequence is EIKETFK. Residues 8–32 traverse the membrane as a helical segment; sequence YINTVVSCLVFVLGIIGNSTLLRII. Over 33-43 the chain is Cytoplasmic; that stretch reads YKNKCMRNGPN. A helical membrane pass occupies residues 44-69; it reads ILIASLALGDLLHIIIDIPISVYKLL. Topologically, residues 70–81 are extracellular; sequence AEDWPFGVEMCK. A disulfide bridge links Cys-80 with Cys-161. Residues 82–103 form a helical membrane-spanning segment; it reads LVPFIQKASVGITVLSLCALSI. Topologically, residues 104–124 are cytoplasmic; that stretch reads DRYRAVASWSRIKGIGVPKWT. The helical transmembrane segment at 125–149 threads the bilayer; it reads AVEIVLIWVISVVLAVPEAIAFDMI. Topologically, residues 150–177 are extracellular; the sequence is TMEYRGKDLRICLLHPTQKTSFMMFYKQ. A helical membrane pass occupies residues 178-202; it reads AKDWWLFSFYFCLPLAITALFYTLM. Residues 203–230 lie on the Cytoplasmic side of the membrane; the sequence is TCEMLRKKSGMQIALNDHLKQRREVAKT. A helical transmembrane segment spans residues 231–256; sequence VFCLVLVFALCWLPLHLSRILKLTIY. Over 257–268 the chain is Extracellular; that stretch reads DQKDPNRCELLS. A helical membrane pass occupies residues 269 to 295; it reads FFLVMDYIGINMASLNSCINPIALYLV. At 296-347 the chain is on the cytoplasmic side; that stretch reads SKRFQNCFKSCLCCWCQSKDLLSLEERQSCLKFKANDHGYDNFRSSNKYSSS. Residues Cys-309 and Cys-311 are each lipidated (S-palmitoyl cysteine).

The protein belongs to the G-protein coupled receptor 1 family. Endothelin receptor subfamily. EDNRB sub-subfamily.

The protein localises to the cell membrane. In terms of biological role, non-specific receptor for endothelin 1, 2, and 3. Mediates its action by association with G proteins that activate a phosphatidylinositol-calcium second messenger system. The sequence is that of Endothelin receptor type B (EDNRB) from Coturnix japonica (Japanese quail).